The sequence spans 335 residues: Probable nicotianamine synthase 3 (335 aa).

It belongs to the nicotianamine synthase (NAS)-like family.

The catalysed reaction is 3 S-adenosyl-L-methionine = nicotianamine + 3 S-methyl-5'-thioadenosine + 3 H(+). Functionally, synthesizes nicotianamine, a polyamine that is the first intermediate in the synthesis of the phytosiderophores of the mugineic acid type found in gramineae which serves as a sensor for the physiological iron status within the plant, and/or might be involved in the transport of iron. This Hordeum vulgare (Barley) protein is Probable nicotianamine synthase 3 (NAS3).